The following is a 222-amino-acid chain: Protein THYLAKOID ASSEMBLY 8, chloroplastic (222 aa).

Residues 1–32 (MALSLSQTRPPSLSHSHTLSVIVPKRTFVSIR) constitute a chloroplast transit peptide. PPR repeat units lie at residues 115 to 149 (DLVLYADIVNALTRNKEFDEIDRLIGEIDGIDQRS) and 150 to 184 (DDKALAKLIRAVVGAERRESVVRVYTLMRESGWGS).

It belongs to the PPR family. P subfamily.

The protein localises to the plastid. The protein resides in the chloroplast thylakoid membrane. In terms of biological role, essential protein required during embryogenesis. Mediates group II organellar RNA introns splicing (e.g. ycf3-2 and trnA). Binds weakly to specific RNA. Promotes the biogenesis of chloroplast thylakoid membranes. This chain is Protein THYLAKOID ASSEMBLY 8, chloroplastic, found in Arabidopsis thaliana (Mouse-ear cress).